Consider the following 336-residue polypeptide: Mitochondrial import receptor subunit TOM40 homolog (336 aa).

A disordered region spans residues 1 to 58; the sequence is MGNVLAASSPAPPAAGSPPAPGLVSVPPGFTMPPVAGLTPTPDKKETQEDRLPNPGTF. Pro residues predominate over residues 10–21; the sequence is PAPPAAGSPPAP. Over residues 42-52 the composition is skewed to basic and acidic residues; sequence PDKKETQEDRL.

It belongs to the Tom40 family. Forms part of the preprotein translocase complex of the outer mitochondrial membrane (TOM complex). Interacts with mitochondrial targeting sequences.

The protein localises to the mitochondrion outer membrane. Functionally, channel-forming protein essential for import of protein precursors into mitochondria. This is Mitochondrial import receptor subunit TOM40 homolog (tomm40) from Xenopus tropicalis (Western clawed frog).